A 154-amino-acid polypeptide reads, in one-letter code: 6,7-dimethyl-8-ribityllumazine synthase (154 aa).

5-amino-6-(D-ribitylamino)uracil is bound by residues Trp22, 56–58 (AWE), and 80–82 (CVI). 85-86 (DT) contributes to the (2S)-2-hydroxy-3-oxobutyl phosphate binding site. His88 serves as the catalytic Proton donor. A 5-amino-6-(D-ribitylamino)uracil-binding site is contributed by Asn113. A (2S)-2-hydroxy-3-oxobutyl phosphate-binding site is contributed by Arg127.

The protein belongs to the DMRL synthase family. As to quaternary structure, forms an icosahedral capsid composed of 60 subunits, arranged as a dodecamer of pentamers.

It carries out the reaction (2S)-2-hydroxy-3-oxobutyl phosphate + 5-amino-6-(D-ribitylamino)uracil = 6,7-dimethyl-8-(1-D-ribityl)lumazine + phosphate + 2 H2O + H(+). It participates in cofactor biosynthesis; riboflavin biosynthesis; riboflavin from 2-hydroxy-3-oxobutyl phosphate and 5-amino-6-(D-ribitylamino)uracil: step 1/2. Catalyzes the formation of 6,7-dimethyl-8-ribityllumazine by condensation of 5-amino-6-(D-ribitylamino)uracil with 3,4-dihydroxy-2-butanone 4-phosphate. This is the penultimate step in the biosynthesis of riboflavin. The polypeptide is 6,7-dimethyl-8-ribityllumazine synthase (Xanthomonas axonopodis pv. citri (strain 306)).